A 230-amino-acid chain; its full sequence is 2,3-bisphosphoglycerate-dependent phosphoglycerate mutase (230 aa).

Residues arginine 8–asparagine 15, threonine 21–glycine 22, arginine 60, glutamate 87–tyrosine 90, lysine 98, arginine 114–arginine 115, and glycine 183–asparagine 184 contribute to the substrate site. The active-site Tele-phosphohistidine intermediate is histidine 9. The Proton donor/acceptor role is filled by glutamate 87.

The protein belongs to the phosphoglycerate mutase family. BPG-dependent PGAM subfamily.

It carries out the reaction (2R)-2-phosphoglycerate = (2R)-3-phosphoglycerate. It functions in the pathway carbohydrate degradation; glycolysis; pyruvate from D-glyceraldehyde 3-phosphate: step 3/5. In terms of biological role, catalyzes the interconversion of 2-phosphoglycerate and 3-phosphoglycerate. The sequence is that of 2,3-bisphosphoglycerate-dependent phosphoglycerate mutase from Streptococcus agalactiae serotype Ia (strain ATCC 27591 / A909 / CDC SS700).